Here is a 368-residue protein sequence, read N- to C-terminus: 3-dehydroquinate synthase (368 aa).

Residues 71–76 (DGEAFK), 105–109 (GVVGD), 129–130 (TT), lysine 142, lysine 151, and 169–172 (TLRT) contribute to the NAD(+) site. 3 residues coordinate Zn(2+): glutamate 184, histidine 247, and histidine 264.

Belongs to the sugar phosphate cyclases superfamily. Dehydroquinate synthase family. Co(2+) serves as cofactor. Zn(2+) is required as a cofactor. Requires NAD(+) as cofactor.

It localises to the cytoplasm. It catalyses the reaction 7-phospho-2-dehydro-3-deoxy-D-arabino-heptonate = 3-dehydroquinate + phosphate. It participates in metabolic intermediate biosynthesis; chorismate biosynthesis; chorismate from D-erythrose 4-phosphate and phosphoenolpyruvate: step 2/7. Catalyzes the conversion of 3-deoxy-D-arabino-heptulosonate 7-phosphate (DAHP) to dehydroquinate (DHQ). The protein is 3-dehydroquinate synthase of Cupriavidus pinatubonensis (strain JMP 134 / LMG 1197) (Cupriavidus necator (strain JMP 134)).